Here is a 1429-residue protein sequence, read N- to C-terminus: DNA-directed RNA polymerase subunit beta' (1429 aa).

Positions 68, 70, 83, and 86 each coordinate Zn(2+). Mg(2+)-binding residues include aspartate 459, aspartate 461, and aspartate 463. 4 residues coordinate Zn(2+): cysteine 805, cysteine 879, cysteine 886, and cysteine 889. The tract at residues 1407-1429 (ESFPLLGGDGEPASTTSSTTEGE) is disordered. The segment covering 1419–1429 (ASTTSSTTEGE) has biased composition (polar residues).

It belongs to the RNA polymerase beta' chain family. The RNAP catalytic core consists of 2 alpha, 1 beta, 1 beta' and 1 omega subunit. When a sigma factor is associated with the core the holoenzyme is formed, which can initiate transcription. Mg(2+) serves as cofactor. It depends on Zn(2+) as a cofactor.

It carries out the reaction RNA(n) + a ribonucleoside 5'-triphosphate = RNA(n+1) + diphosphate. DNA-dependent RNA polymerase catalyzes the transcription of DNA into RNA using the four ribonucleoside triphosphates as substrates. The sequence is that of DNA-directed RNA polymerase subunit beta' from Rhodopirellula baltica (strain DSM 10527 / NCIMB 13988 / SH1).